Here is a 570-residue protein sequence, read N- to C-terminus: Hydroxylamine reductase (570 aa).

[4Fe-4S] cluster-binding residues include C5, C8, C17, and C23. Hybrid [4Fe-2O-2S] cluster is bound by residues H266, E290, C334, C425, C453, C478, E513, and K515. The residue at position 425 (C425) is a Cysteine persulfide.

Belongs to the HCP family. It depends on [4Fe-4S] cluster as a cofactor. The cofactor is hybrid [4Fe-2O-2S] cluster.

The protein resides in the cytoplasm. It catalyses the reaction A + NH4(+) + H2O = hydroxylamine + AH2 + H(+). In terms of biological role, catalyzes the reduction of hydroxylamine to form NH(3) and H(2)O. This chain is Hydroxylamine reductase, found in Clostridium botulinum (strain Langeland / NCTC 10281 / Type F).